The sequence spans 280 residues: Urease accessory protein UreD 1 (280 aa).

The protein belongs to the UreD family. UreD, UreF and UreG form a complex that acts as a GTP-hydrolysis-dependent molecular chaperone, activating the urease apoprotein by helping to assemble the nickel containing metallocenter of UreC. The UreE protein probably delivers the nickel.

It localises to the cytoplasm. Required for maturation of urease via the functional incorporation of the urease nickel metallocenter. The protein is Urease accessory protein UreD 1 of Brucella melitensis biotype 1 (strain ATCC 23456 / CCUG 17765 / NCTC 10094 / 16M).